Here is a 498-residue protein sequence, read N- to C-terminus: Glycylpeptide N-tetradecanoyltransferase 2 (498 aa).

The tract at residues 1 to 87 (MAEDSESAAS…QPPSKNSTIP (87 aa)) is disordered. The segment covering 15-32 (ELDDQDTCGIDGDNEEET) has biased composition (acidic residues). Serine 38 is subject to Phosphoserine. A compositionally biased stretch (basic residues) spans 46-57 (KKKKKKQKRKKE). Over residues 61-72 (SGGTKSDSASDS) the composition is skewed to polar residues. Tetradecanoyl-CoA contacts are provided by histidine 117, tryptophan 122, leucine 250, valine 252, serine 258, arginine 260, valine 261, and alanine 262.

This sequence belongs to the NMT family.

The protein localises to the cytoplasm. It is found in the membrane. It carries out the reaction N-terminal glycyl-[protein] + tetradecanoyl-CoA = N-tetradecanoylglycyl-[protein] + CoA + H(+). The catalysed reaction is N-terminal glycyl-L-lysyl-[protein] + tetradecanoyl-CoA = N-terminal glycyl-(N(6)-tetradecanoyl)-L-lysyl-[protein] + CoA + H(+). Adds a myristoyl group to the N-terminal glycine residue of certain cellular and viral proteins. Also able to mediate N-terminal lysine myristoylation of proteins: catalyzes myristoylation of ARF6 on both 'Gly-2' and 'Lys-3'. Lysine myristoylation is required to maintain ARF6 on membranes during the GTPase cycle. The sequence is that of Glycylpeptide N-tetradecanoyltransferase 2 (NMT2) from Bos taurus (Bovine).